The following is a 796-amino-acid chain: MAKGVNQIINNIRLRKLRKILNQINALSEEFSNFSDEALQAKTKEFKVYLNDNKASLNHILPQAYATVREASKRVLGMYPKDVQILGAIAMHQGNIAEMQTGEGKTLTATMPLYLNALTGKGAYLITTNDYLAKRDFLEMKPLYEWLGLSVSLGFVDIPEYEYAENEKYELYHHDIVYTTNGRLGFDYLIDNLADDIRAKFLPKLNFAIIDEVDSIILDAAQTPLVISGAPRVQSNLFHIVKKFVETLEKDKDFIVNFNKKEVWLTDEGSEKASHYFKVNSIYQQQYFDLVRMIHLSLRAKYLFKYNLDYFIFDGEIVLIDRITGRMLPGTKLQSGLHQAIEALENVEISQDMSVMATITFQNLFKQFDEFSGMTGTGKLGEKEFFDLYSKVVIEIPTHSPIERDDRPDRVFANGDKKNDAILKTVIGIHETQQPVLLITRTAEAAEYFSAELFKRDIPNNLLIAQNVAKEAQMIAEAGQLSAVTVATSMAGRGTDIKLSKEVHDIGGLAVIINEHMDNSRVDRQLRGRSGRQGDPGYSQIFVSLDDDLVKRWSNSNLAENKNLQTMDASKLESSALFKKRVKSIVNKAQRVSEETAMKNREMANEFEKSISVQRDKIYAERNHILEASDFDDFNFEQLARDVFTKDVKNLDLSSERALVNYIYENLSFVFDEDVSNINMQNDEEIIQFLIQQFTQQFNNRLEVAADSYLKLRFIQKSILKAIDSEWIEQVDNLQQLKASVNNRQNGQRNVIFEYHKVALETYEYMSEDIKRKMVRNLCLSILAFDKDGDMVIHFP.

ATP contacts are provided by residues Q84, 102–106 (GEGKT), and D496.

Belongs to the SecA family. As to quaternary structure, monomer and homodimer. Part of the essential Sec protein translocation apparatus which comprises SecA, SecYEG and auxiliary proteins SecDF. Other proteins may also be involved.

It is found in the cell membrane. The protein resides in the cytoplasm. The catalysed reaction is ATP + H2O + cellular proteinSide 1 = ADP + phosphate + cellular proteinSide 2.. In terms of biological role, part of the Sec protein translocase complex. Interacts with the SecYEG preprotein conducting channel. Has a central role in coupling the hydrolysis of ATP to the transfer of proteins into and across the cell membrane, serving as an ATP-driven molecular motor driving the stepwise translocation of polypeptide chains across the membrane. This is Protein translocase subunit SecA 2 from Staphylococcus epidermidis (strain ATCC 12228 / FDA PCI 1200).